A 331-amino-acid polypeptide reads, in one-letter code: uncharacterized protein (331 aa).

Belongs to the proline racemase family.

This is an uncharacterized protein from Bacillus anthracis.